Reading from the N-terminus, the 134-residue chain is Large ribosomal subunit protein bL19 (134 aa).

The tract at residues 108–134 is disordered; sequence KSARIVERSDRSDKAKAQKAAAATAAE. A compositionally biased stretch (basic and acidic residues) spans 111–123; that stretch reads RIVERSDRSDKAK. Positions 125 to 134 are enriched in low complexity; the sequence is QKAAAATAAE.

The protein belongs to the bacterial ribosomal protein bL19 family.

This protein is located at the 30S-50S ribosomal subunit interface and may play a role in the structure and function of the aminoacyl-tRNA binding site. The chain is Large ribosomal subunit protein bL19 from Methylorubrum extorquens (strain PA1) (Methylobacterium extorquens).